The primary structure comprises 105 residues: Nucleoid-associated protein EAT1b_1710 (105 aa).

The span at 1–16 (MRGMGNMNNMMKQMQK) shows a compositional bias: low complexity. The tract at residues 1–26 (MRGMGNMNNMMKQMQKMQKDMAKAQE) is disordered. Positions 17–26 (MQKDMAKAQE) are enriched in basic and acidic residues.

Belongs to the YbaB/EbfC family. Homodimer.

Its subcellular location is the cytoplasm. It is found in the nucleoid. Binds to DNA and alters its conformation. May be involved in regulation of gene expression, nucleoid organization and DNA protection. This is Nucleoid-associated protein EAT1b_1710 from Exiguobacterium sp. (strain ATCC BAA-1283 / AT1b).